The chain runs to 349 residues: D-alanine--D-alanine ligase (349 aa).

Residues 132–335 form the ATP-grasp domain; sequence KHVFEAVGVP…YSDLIEKLVD (204 aa). 162-217 contacts ATP; it reads VEKLEFPVFVKPANMGSSVGISKVDDLADLQPALSEAYKYDNRVVIEQGVDAREIE. D289, E302, and N304 together coordinate Mg(2+).

The protein belongs to the D-alanine--D-alanine ligase family. The cofactor is Mg(2+). It depends on Mn(2+) as a cofactor.

The protein localises to the cytoplasm. It carries out the reaction 2 D-alanine + ATP = D-alanyl-D-alanine + ADP + phosphate + H(+). Its pathway is cell wall biogenesis; peptidoglycan biosynthesis. Functionally, cell wall formation. This chain is D-alanine--D-alanine ligase, found in Lactococcus lactis subsp. lactis (strain IL1403) (Streptococcus lactis).